The sequence spans 372 residues: N-methyl-L-tryptophan oxidase (372 aa).

Residue 4–34 (DLIIIGSGSVGAAAGYYATRAGLNVLMTDAH) coordinates FAD. Cysteine 308 bears the S-8alpha-FAD cysteine mark.

This sequence belongs to the MSOX/MTOX family. MTOX subfamily. In terms of assembly, monomer. The cofactor is FAD.

It catalyses the reaction N(alpha)-methyl-L-tryptophan + O2 + H2O = L-tryptophan + formaldehyde + H2O2. Functionally, catalyzes the oxidative demethylation of N-methyl-L-tryptophan. This Escherichia coli O9:H4 (strain HS) protein is N-methyl-L-tryptophan oxidase.